Here is a 474-residue protein sequence, read N- to C-terminus: GTPase Der (474 aa).

EngA-type G domains follow at residues 3–167 (FTVA…GVDR) and 204–379 (LRVA…MVWN). GTP is bound by residues 9–16 (GRPNVGKS), 56–60 (DTAGL), 119–122 (NKSE), 210–217 (GRPNAGKS), 257–261 (DTAGM), and 322–325 (NKWD). A KH-like domain is found at 380–464 (KRISTAKLNR…PIRIHLKASE (85 aa)).

It belongs to the TRAFAC class TrmE-Era-EngA-EngB-Septin-like GTPase superfamily. EngA (Der) GTPase family. In terms of assembly, associates with the 50S ribosomal subunit.

Functionally, GTPase that plays an essential role in the late steps of ribosome biogenesis. The chain is GTPase Der from Allorhizobium ampelinum (strain ATCC BAA-846 / DSM 112012 / S4) (Agrobacterium vitis (strain S4)).